We begin with the raw amino-acid sequence, 391 residues long: MGSRGRRGGGERETETEEDETWKLRVGDDFTVPERFHRKPPFFSRIFPAGSHGKHRKIAKYYKKQENLLKDFSEMETMNEIGSLDQNAPTEEELRQMAKGERLAINLSNIINLILFIGKVLASVESLSMAVIASTLDSLLDLLSGFILWFTAHAMKKPNKYSYPIGKRRMQPVGIIVFASVMGTLGFQVLIESGRQLITNEHQVFDHRKELWMIGSMSSVAVVKFFLMLYCRSFKNEIVRAYAQDHFFDVITNSVGLVSALLAVRYKWWMDPVGAILIAVYTITTWARTVVENVGTLIGRSAPAEYLTKLTYLIWNHHEEIRHIDTVRAYTFGTHYFVEVDIVLPGDMPLSHAHDIGESLQEKLEQLPEVERAFVHVDFEFTHRPEHKAEV.

The disordered stretch occupies residues 1-21; sequence MGSRGRRGGGERETETEEDET. At 1 to 103 the chain is on the cytoplasmic side; that stretch reads MGSRGRRGGG…LRQMAKGERL (103 aa). A helical membrane pass occupies residues 104-124; it reads AINLSNIINLILFIGKVLASV. Residues 125–134 lie on the Vacuolar side of the membrane; that stretch reads ESLSMAVIAS. The helical transmembrane segment at 135–155 threads the bilayer; it reads TLDSLLDLLSGFILWFTAHAM. The Cytoplasmic portion of the chain corresponds to 156 to 171; it reads KKPNKYSYPIGKRRMQ. Residues 172–192 traverse the membrane as a helical segment; it reads PVGIIVFASVMGTLGFQVLIE. Topologically, residues 193-210 are vacuolar; the sequence is SGRQLITNEHQVFDHRKE. The chain crosses the membrane as a helical span at residues 211 to 231; the sequence is LWMIGSMSSVAVVKFFLMLYC. The Cytoplasmic segment spans residues 232 to 246; sequence RSFKNEIVRAYAQDH. Residues 247 to 264 traverse the membrane as a helical segment; sequence FFDVITNSVGLVSALLAV. At 265–266 the chain is on the vacuolar side; the sequence is RY. A helical membrane pass occupies residues 267 to 287; it reads KWWMDPVGAILIAVYTITTWA. Over 288–391 the chain is Cytoplasmic; the sequence is RTVVENVGTL…THRPEHKAEV (104 aa).

The protein belongs to the cation diffusion facilitator (CDF) transporter (TC 2.A.4) family. SLC30A subfamily.

The protein resides in the vacuole membrane. Functionally, involved in sequestration of excess metal in the cytoplasm into vacuoles to maintain metal homeostasis. This is Metal tolerance protein 7 (MTP7) from Oryza sativa subsp. japonica (Rice).